The primary structure comprises 733 residues: Catalase-peroxidase (733 aa).

The first 23 residues, 1 to 23 (MNNESKCPFAAAHGVRSPATARA), serve as a signal peptide directing secretion. Residues 96–224 (WHSAGTYRTA…LAAVQMGLIY (129 aa)) constitute a cross-link (tryptophyl-tyrosyl-methioninium (Trp-Tyr) (with M-250)). Histidine 97 functions as the Proton acceptor in the catalytic mechanism. A cross-link (tryptophyl-tyrosyl-methioninium (Tyr-Met) (with W-96)) is located at residues 224–250 (YVNPEGPDGNPDPVASGRDVRETFARM). Histidine 265 provides a ligand contact to heme b.

Belongs to the peroxidase family. Peroxidase/catalase subfamily. Homodimer or homotetramer. It depends on heme b as a cofactor. In terms of processing, formation of the three residue Trp-Tyr-Met cross-link is important for the catalase, but not the peroxidase activity of the enzyme.

The catalysed reaction is H2O2 + AH2 = A + 2 H2O. It catalyses the reaction 2 H2O2 = O2 + 2 H2O. In terms of biological role, bifunctional enzyme with both catalase and broad-spectrum peroxidase activity. This is Catalase-peroxidase from Azoarcus sp. (strain BH72).